Reading from the N-terminus, the 398-residue chain is Succinate--CoA ligase [ADP-forming] subunit beta (398 aa).

Residues 9-254 (KRLLHTYGAP…LSEEDEKEIE (246 aa)) enclose the ATP-grasp domain. ATP is bound by residues Lys-46, 53 to 55 (GRG), Glu-109, Ala-112, and Glu-117. Mg(2+) is bound by residues Asn-209 and Asp-223. Residues Asn-274 and 331 to 333 (GIM) each bind substrate.

The protein belongs to the succinate/malate CoA ligase beta subunit family. Heterotetramer of two alpha and two beta subunits. Mg(2+) serves as cofactor.

It carries out the reaction succinate + ATP + CoA = succinyl-CoA + ADP + phosphate. The enzyme catalyses GTP + succinate + CoA = succinyl-CoA + GDP + phosphate. Its pathway is carbohydrate metabolism; tricarboxylic acid cycle; succinate from succinyl-CoA (ligase route): step 1/1. Functionally, succinyl-CoA synthetase functions in the citric acid cycle (TCA), coupling the hydrolysis of succinyl-CoA to the synthesis of either ATP or GTP and thus represents the only step of substrate-level phosphorylation in the TCA. The beta subunit provides nucleotide specificity of the enzyme and binds the substrate succinate, while the binding sites for coenzyme A and phosphate are found in the alpha subunit. In Brucella anthropi (strain ATCC 49188 / DSM 6882 / CCUG 24695 / JCM 21032 / LMG 3331 / NBRC 15819 / NCTC 12168 / Alc 37) (Ochrobactrum anthropi), this protein is Succinate--CoA ligase [ADP-forming] subunit beta.